We begin with the raw amino-acid sequence, 314 residues long: Ferrochelatase (314 aa).

The Fe cation site is built by His-184 and Glu-259.

It belongs to the ferrochelatase family.

It localises to the cytoplasm. It carries out the reaction heme b + 2 H(+) = protoporphyrin IX + Fe(2+). The protein operates within porphyrin-containing compound metabolism; protoheme biosynthesis; protoheme from protoporphyrin-IX: step 1/1. Catalyzes the ferrous insertion into protoporphyrin IX. The protein is Ferrochelatase of Chlamydia trachomatis serovar D (strain ATCC VR-885 / DSM 19411 / UW-3/Cx).